Here is a 295-residue protein sequence, read N- to C-terminus: Bifunctional protein FolD (295 aa).

NADP(+) contacts are provided by residues 166 to 168, S191, and I232; that span reads GRS.

Belongs to the tetrahydrofolate dehydrogenase/cyclohydrolase family. As to quaternary structure, homodimer.

The enzyme catalyses (6R)-5,10-methylene-5,6,7,8-tetrahydrofolate + NADP(+) = (6R)-5,10-methenyltetrahydrofolate + NADPH. It catalyses the reaction (6R)-5,10-methenyltetrahydrofolate + H2O = (6R)-10-formyltetrahydrofolate + H(+). It participates in one-carbon metabolism; tetrahydrofolate interconversion. In terms of biological role, catalyzes the oxidation of 5,10-methylenetetrahydrofolate to 5,10-methenyltetrahydrofolate and then the hydrolysis of 5,10-methenyltetrahydrofolate to 10-formyltetrahydrofolate. This chain is Bifunctional protein FolD, found in Rhodopseudomonas palustris (strain BisB18).